Consider the following 180-residue polypeptide: Translation initiation factor IF-3 (180 aa).

It belongs to the IF-3 family. As to quaternary structure, monomer.

It localises to the cytoplasm. Functionally, IF-3 binds to the 30S ribosomal subunit and shifts the equilibrium between 70S ribosomes and their 50S and 30S subunits in favor of the free subunits, thus enhancing the availability of 30S subunits on which protein synthesis initiation begins. The protein is Translation initiation factor IF-3 of Xylella fastidiosa (strain Temecula1 / ATCC 700964).